Reading from the N-terminus, the 129-residue chain is Large ribosomal subunit protein bL17 (129 aa).

This sequence belongs to the bacterial ribosomal protein bL17 family. As to quaternary structure, part of the 50S ribosomal subunit. Contacts protein L32.

In Pseudomonas aeruginosa (strain UCBPP-PA14), this protein is Large ribosomal subunit protein bL17.